Here is a 128-residue protein sequence, read N- to C-terminus: Entry-fusion complex protein OPG094 (128 aa).

Topologically, residues Met-1–Leu-30 are intravirion. The chain crosses the membrane as a helical; Signal-anchor for type III membrane protein span at residues Ile-31 to Leu-51. Residues Asn-52–Cys-107 lie on the Virion surface side of the membrane. Residues Cys-75 and Cys-107 are joined by a disulfide bond.

The protein belongs to the orthopoxvirus OPG099 family. As to quaternary structure, interacts with OPG086. Component of the entry fusion complex (EFC) composed of OPG053, OPG076, OPG086, OPG094, OPG095, OPG099, OPG107, OPG143, OPG104J5, OPG147 and OPG155. Except for OPG095 and OPG053, each of the EFC proteins is required for assembly or stability of the complex. Post-translationally, most cysteines are linked by disulfide bonds. They are created by the viral disulfide bond formation pathway, a poxvirus-specific redox pathway that operates on the cytoplasmic side of the MV membranes. In terms of processing, unglycosylated because produced in viral factories instead of the classic ER -Golgi route.

The protein resides in the virion membrane. In terms of biological role, component of the entry fusion complex (EFC), which consists of 11 proteins. During cell infection, this complex mediates entry of the virion core into the host cytoplasm by a two-step mechanism consisting of lipid mixing of the viral and cellular membranes and subsequent pore formation. This is Entry-fusion complex protein OPG094 (OPG099) from Vaccinia virus (strain Copenhagen) (VACV).